The following is a 171-amino-acid chain: Der GTPase-activating protein YihI (171 aa).

Disordered regions lie at residues methionine 1–leucine 99 and leucine 145–asparagine 171. A compositionally biased stretch (basic and acidic residues) spans threonine 20–aspartate 30. Positions arginine 31–histidine 40 are enriched in basic residues. Residues tyrosine 147–glutamine 160 show a composition bias toward acidic residues.

It belongs to the YihI family. Interacts with Der.

Its function is as follows. A GTPase-activating protein (GAP) that modifies Der/EngA GTPase function. May play a role in ribosome biogenesis. This is Der GTPase-activating protein YihI from Salmonella agona (strain SL483).